The chain runs to 150 residues: Plasmin C (150 aa).

The signal sequence occupies residues 1 to 14 (MRSFFLLCALVAVC).

This chain is Plasmin C (PLSC), found in Physarum polycephalum (Slime mold).